A 602-amino-acid chain; its full sequence is Elongation factor 4 (602 aa).

In terms of domain architecture, tr-type G spans 8–189 (KNIRNFSIIA…KIITTIPAPS (182 aa)). Residues 20–25 (DHGKST) and 136–139 (NKID) each bind GTP.

The protein belongs to the TRAFAC class translation factor GTPase superfamily. Classic translation factor GTPase family. LepA subfamily.

It localises to the cell inner membrane. The enzyme catalyses GTP + H2O = GDP + phosphate + H(+). Required for accurate and efficient protein synthesis under certain stress conditions. May act as a fidelity factor of the translation reaction, by catalyzing a one-codon backward translocation of tRNAs on improperly translocated ribosomes. Back-translocation proceeds from a post-translocation (POST) complex to a pre-translocation (PRE) complex, thus giving elongation factor G a second chance to translocate the tRNAs correctly. Binds to ribosomes in a GTP-dependent manner. This is Elongation factor 4 from Helicobacter pylori (strain ATCC 700392 / 26695) (Campylobacter pylori).